Reading from the N-terminus, the 1462-residue chain is Gag-Pol polyprotein (1462 aa).

Gly2 is lipidated: N-myristoyl glycine; by host. An interaction with Gp41 region spans residues 7-31; the sequence is VLRGKKADELEKIRLRPGGKKKYRL. The Nuclear export signal signature appears at 16 to 22; the sequence is LEKIRLR. Residues 26–32 carry the Nuclear localization signal motif; sequence KKKYRLK. Positions 191–228 are interaction with human PPIA/CYPA and NUP153; sequence NCVGDHQAAMQIIREIINEEAADWDVQHPIPGPLPAGQ. A dimerization/Multimerization of capsid protein p24 region spans residues 279 to 364; that stretch reads YNPTNILDIK…GGPGQKARLM (86 aa). 2 consecutive CCHC-type zinc fingers follow at residues 388–405 and 409–426; these read IKCWNCGKEGHSARQCRA and QGCWKCGKSGHIMANCPD. The tract at residues 441–507 is disordered; that stretch reads APQLPRGPKF…RRDTTQRDDR (67 aa). The segment covering 454–468 has biased composition (low complexity); that stretch reads NTNSTPNGSSSGPTG. 2 stretches are compositionally biased toward basic and acidic residues: residues 471–490 and 497–507; these read HAAREKTERAETKTIQRSDR and ARRDTTQRDDR. A dimerization of protease region spans residues 512–516; it reads PQFSL. The Peptidase A2 domain occupies 531-600; it reads VEVLLDTGAD…TPINIFGRNI (70 aa). The active-site For protease activity; shared with dimeric partner is Asp536. 2 dimerization of protease regions span residues 560–566 and 599–611; these read GIGGFIN and NILTALGMSLNLP. The 191-residue stretch at 654-844 folds into the Reverse transcriptase domain; the sequence is EGQLEEAPPT…PPYQWMGYEL (191 aa). 3 residues coordinate Mg(2+): Asp720, Asp795, and Asp796. The tract at residues 837–845 is RT 'primer grip'; sequence YQWMGYELW. The Tryptophan repeat motif motif lies at 1007–1023; that stretch reads WEQWWDNYWQVTWIPDW. One can recognise an RNase H type-1 domain in the interval 1043 to 1166; that stretch reads IPGAETFYTD…IDHLVSQGIR (124 aa). The Mg(2+) site is built by Asp1052, Glu1087, Asp1107, and Asp1158. The Integrase-type zinc finger occupies 1172 to 1213; sequence ERIEPAQEEHGKYHSNVKELAHKFGLPNLVARQIVNTCAQCQ. Zn(2+) is bound by residues His1181, His1185, Cys1209, and Cys1212. Positions 1222 to 1373 constitute an Integrase catalytic domain; sequence QVNAELGTWQ…TPVERLVNMI (152 aa). Residues Asp1233, Asp1285, and Glu1321 each coordinate Mg(2+). The integrase-type DNA-binding region spans 1392 to 1439; it reads FRVYFREGRNQLWQGPGELLWKGDGAVIVKVGTDIKVIPRRKAKIIRD. Residues 1443-1462 form a disordered region; sequence RQEMDSGSHLEGAREDGEMA.

Homotrimer; further assembles as hexamers of trimers. Interacts with gp41 (via C-terminus). Interacts with host CALM1; this interaction induces a conformational change in the Matrix protein, triggering exposure of the myristate group. Interacts with host AP3D1; this interaction allows the polyprotein trafficking to multivesicular bodies during virus assembly. Part of the pre-integration complex (PIC) which is composed of viral genome, matrix protein, Vpr and integrase. As to quaternary structure, homodimer; the homodimer further multimerizes as homohexamers or homopentamers. Interacts with human PPIA/CYPA. Interacts with human NUP153. Interacts with host PDZD8; this interaction stabilizes the capsid. Interacts with monkey TRIM5; this interaction destabilizes the capsid. In terms of assembly, homodimer, whose active site consists of two apposed aspartic acid residues. Heterodimer of p66 RT and p51 RT (RT p66/p51). Heterodimerization of RT is essential for DNA polymerase activity. The overall folding of the subdomains is similar in p66 RT and p51 RT but the spatial arrangements of the subdomains are dramatically different. As to quaternary structure, homotetramer; may further associate as a homohexadecamer. Part of the pre-integration complex (PIC) which is composed of viral genome, matrix protein, Vpr and integrase. Interacts with human SMARCB1/INI1 and human PSIP1/LEDGF isoform 1. Interacts with human KPNA3; this interaction might play a role in nuclear import of the pre-integration complex. Interacts with human NUP153; this interaction might play a role in nuclear import of the pre-integration complex. Mg(2+) is required as a cofactor. Post-translationally, specific enzymatic cleavages by the viral protease yield mature proteins. The protease is released by autocatalytic cleavage. The polyprotein is cleaved during and after budding, this process is termed maturation. Proteolytic cleavage of p66 RT removes the RNase H domain to yield the p51 RT subunit. Nucleocapsid protein p7 might be further cleaved after virus entry.

It is found in the host cell membrane. Its subcellular location is the host endosome. The protein localises to the host multivesicular body. The protein resides in the virion membrane. It localises to the host nucleus. It is found in the host cytoplasm. Its subcellular location is the virion. The catalysed reaction is Endopeptidase for which the P1 residue is preferably hydrophobic.. It catalyses the reaction Endohydrolysis of RNA in RNA/DNA hybrids. Three different cleavage modes: 1. sequence-specific internal cleavage of RNA. Human immunodeficiency virus type 1 and Moloney murine leukemia virus enzymes prefer to cleave the RNA strand one nucleotide away from the RNA-DNA junction. 2. RNA 5'-end directed cleavage 13-19 nucleotides from the RNA end. 3. DNA 3'-end directed cleavage 15-20 nucleotides away from the primer terminus.. It carries out the reaction 3'-end directed exonucleolytic cleavage of viral RNA-DNA hybrid.. The enzyme catalyses DNA(n) + a 2'-deoxyribonucleoside 5'-triphosphate = DNA(n+1) + diphosphate. With respect to regulation, protease: The viral protease is inhibited by many synthetic protease inhibitors (PIs), such as amprenavir, atazanavir, indinavir, loprinavir, nelfinavir, ritonavir and saquinavir. Use of protease inhibitors in tritherapy regimens permit more ambitious therapeutic strategies. Reverse transcriptase/ribonuclease H: RT can be inhibited either by nucleoside RT inhibitors (NRTIs) or by non nucleoside RT inhibitors (NNRTIs). NRTIs act as chain terminators, whereas NNRTIs inhibit DNA polymerization by binding a small hydrophobic pocket near the RT active site and inducing an allosteric change in this region. Classical NRTIs are abacavir, adefovir (PMEA), didanosine (ddI), lamivudine (3TC), stavudine (d4T), tenofovir (PMPA), zalcitabine (ddC), and zidovudine (AZT). Classical NNRTIs are atevirdine (BHAP U-87201E), delavirdine, efavirenz (DMP-266), emivirine (I-EBU), and nevirapine (BI-RG-587). The tritherapies used as a basic effective treatment of AIDS associate two NRTIs and one NNRTI. Functionally, mediates, with Gag polyprotein, the essential events in virion assembly, including binding the plasma membrane, making the protein-protein interactions necessary to create spherical particles, recruiting the viral Env proteins, and packaging the genomic RNA via direct interactions with the RNA packaging sequence (Psi). Gag-Pol polyprotein may regulate its own translation, by the binding genomic RNA in the 5'-UTR. At low concentration, the polyprotein would promote translation, whereas at high concentration, the polyprotein would encapsidate genomic RNA and then shut off translation. Targets the polyprotein to the plasma membrane via a multipartite membrane-binding signal, that includes its myristoylated N-terminus. Matrix protein is part of the pre-integration complex. Implicated in the release from host cell mediated by Vpu. Binds to RNA. Its function is as follows. Forms the conical core that encapsulates the genomic RNA-nucleocapsid complex in the virion. Most core are conical, with only 7% tubular. The core is constituted by capsid protein hexamer subunits. The core is disassembled soon after virion entry. Host restriction factors such as TRIM5-alpha or TRIMCyp bind retroviral capsids and cause premature capsid disassembly, leading to blocks in reverse transcription. Capsid restriction by TRIM5 is one of the factors which restricts HIV-1 to the human species. Host PIN1 apparently facilitates the virion uncoating. On the other hand, interactions with PDZD8 or CYPA stabilize the capsid. In terms of biological role, encapsulates and protects viral dimeric unspliced genomic RNA (gRNA). Binds these RNAs through its zinc fingers. Acts as a nucleic acid chaperone which is involved in rearangement of nucleic acid secondary structure during gRNA retrotranscription. Also facilitates template switch leading to recombination. As part of the polyprotein, participates in gRNA dimerization, packaging, tRNA incorporation and virion assembly. Functionally, aspartyl protease that mediates proteolytic cleavages of Gag and Gag-Pol polyproteins during or shortly after the release of the virion from the plasma membrane. Cleavages take place as an ordered, step-wise cascade to yield mature proteins. This process is called maturation. Displays maximal activity during the budding process just prior to particle release from the cell. Also cleaves Nef and Vif, probably concomitantly with viral structural proteins on maturation of virus particles. Hydrolyzes host EIF4GI and PABP1 in order to shut off the capped cellular mRNA translation. The resulting inhibition of cellular protein synthesis serves to ensure maximal viral gene expression and to evade host immune response. Multifunctional enzyme that converts the viral RNA genome into dsDNA in the cytoplasm, shortly after virus entry into the cell. This enzyme displays a DNA polymerase activity that can copy either DNA or RNA templates, and a ribonuclease H (RNase H) activity that cleaves the RNA strand of RNA-DNA heteroduplexes in a partially processive 3' to 5' endonucleasic mode. Conversion of viral genomic RNA into dsDNA requires many steps. A tRNA(3)-Lys binds to the primer-binding site (PBS) situated at the 5'-end of the viral RNA. RT uses the 3' end of the tRNA primer to perform a short round of RNA-dependent minus-strand DNA synthesis. The reading proceeds through the U5 region and ends after the repeated (R) region which is present at both ends of viral RNA. The portion of the RNA-DNA heteroduplex is digested by the RNase H, resulting in a ssDNA product attached to the tRNA primer. This ssDNA/tRNA hybridizes with the identical R region situated at the 3' end of viral RNA. This template exchange, known as minus-strand DNA strong stop transfer, can be either intra- or intermolecular. RT uses the 3' end of this newly synthesized short ssDNA to perform the RNA-dependent minus-strand DNA synthesis of the whole template. RNase H digests the RNA template except for two polypurine tracts (PPTs) situated at the 5'-end and near the center of the genome. It is not clear if both polymerase and RNase H activities are simultaneous. RNase H probably can proceed both in a polymerase-dependent (RNA cut into small fragments by the same RT performing DNA synthesis) and a polymerase-independent mode (cleavage of remaining RNA fragments by free RTs). Secondly, RT performs DNA-directed plus-strand DNA synthesis using the PPTs that have not been removed by RNase H as primers. PPTs and tRNA primers are then removed by RNase H. The 3' and 5' ssDNA PBS regions hybridize to form a circular dsDNA intermediate. Strand displacement synthesis by RT to the PBS and PPT ends produces a blunt ended, linear dsDNA copy of the viral genome that includes long terminal repeats (LTRs) at both ends. Its function is as follows. Catalyzes viral DNA integration into the host chromosome, by performing a series of DNA cutting and joining reactions. This enzyme activity takes place after virion entry into a cell and reverse transcription of the RNA genome in dsDNA. The first step in the integration process is 3' processing. This step requires a complex comprising the viral genome, matrix protein, Vpr and integrase. This complex is called the pre-integration complex (PIC). The integrase protein removes 2 nucleotides from each 3' end of the viral DNA, leaving recessed CA OH's at the 3' ends. In the second step, the PIC enters cell nucleus. This process is mediated through integrase and Vpr proteins, and allows the virus to infect a non dividing cell. This ability to enter the nucleus is specific of lentiviruses, other retroviruses cannot and rely on cell division to access cell chromosomes. In the third step, termed strand transfer, the integrase protein joins the previously processed 3' ends to the 5' ends of strands of target cellular DNA at the site of integration. The 5'-ends are produced by integrase-catalyzed staggered cuts, 5 bp apart. A Y-shaped, gapped, recombination intermediate results, with the 5'-ends of the viral DNA strands and the 3' ends of target DNA strands remaining unjoined, flanking a gap of 5 bp. The last step is viral DNA integration into host chromosome. This involves host DNA repair synthesis in which the 5 bp gaps between the unjoined strands are filled in and then ligated. Since this process occurs at both cuts flanking the HIV genome, a 5 bp duplication of host DNA is produced at the ends of HIV-1 integration. Alternatively, Integrase may catalyze the excision of viral DNA just after strand transfer, this is termed disintegration. The protein is Gag-Pol polyprotein (gag-pol) of Human immunodeficiency virus type 2 subtype A (isolate SBLISY) (HIV-2).